The sequence spans 520 residues: MAKIGRALISVSEKTGVVEFSRALAGYGVEILSTGGTAKLLREAGIAVKDVSEFTGFPEMLDGRVKTLHPKVHGGILGMRENPAHVAKMQEHGIEPIDMVVVNLYPFEATVAKEDCTMEDAIENIDIGGPTMLRSAAKNNRDVTVVVDHADYAVVLDEMKNSGGSVSRETNFRLAVKVYQHTAAYDGAISNWLGARTGEGVAPFPDTLTMQYKLAQGMRYGENPHQSGAFYVEKGSRESSISTARQIQGKELSYNNIGDTDAALECVKQFTEPACVIVKHANPCGVALGANIMEAYDKAYKTDPESAFGGIIAFNRELDESTARAIVERQFVEVIIAPKVTEAASEIVAAKKNVRLMECGFWPENPAPRFDYKRVNGGMLVQDADLELFTELKVVTKRAPTDKEMEDLLFTWRVAKFVKSNAIVYGRDNSTVGVGAGQMSRVNSARIAAIKAEHAGIPVQGAVMASDAFFPFRDGLDNAASVGVTAVIQPGGSMRDAEVIAAADEHGIAMVFTSMRHFRH.

An MGS-like domain is found at 1–147 (MAKIGRALIS…KNNRDVTVVV (147 aa)).

This sequence belongs to the PurH family.

It carries out the reaction (6R)-10-formyltetrahydrofolate + 5-amino-1-(5-phospho-beta-D-ribosyl)imidazole-4-carboxamide = 5-formamido-1-(5-phospho-D-ribosyl)imidazole-4-carboxamide + (6S)-5,6,7,8-tetrahydrofolate. The catalysed reaction is IMP + H2O = 5-formamido-1-(5-phospho-D-ribosyl)imidazole-4-carboxamide. It participates in purine metabolism; IMP biosynthesis via de novo pathway; 5-formamido-1-(5-phospho-D-ribosyl)imidazole-4-carboxamide from 5-amino-1-(5-phospho-D-ribosyl)imidazole-4-carboxamide (10-formyl THF route): step 1/1. It functions in the pathway purine metabolism; IMP biosynthesis via de novo pathway; IMP from 5-formamido-1-(5-phospho-D-ribosyl)imidazole-4-carboxamide: step 1/1. In Citrifermentans bemidjiense (strain ATCC BAA-1014 / DSM 16622 / JCM 12645 / Bem) (Geobacter bemidjiensis), this protein is Bifunctional purine biosynthesis protein PurH.